The primary structure comprises 43 residues: Protein PsbN (43 aa).

Residues 7 to 27 (VAIFISGLLVSFTGYALYTAF) traverse the membrane as a helical segment.

The protein belongs to the PsbN family.

It is found in the plastid. The protein localises to the chloroplast thylakoid membrane. In terms of biological role, may play a role in photosystem I and II biogenesis. This chain is Protein PsbN, found in Daucus carota (Wild carrot).